Reading from the N-terminus, the 465-residue chain is UDP-N-acetylmuramate--L-alanine ligase (465 aa).

An ATP-binding site is contributed by 112–118; the sequence is GTHGKTT.

This sequence belongs to the MurCDEF family.

The protein localises to the cytoplasm. It carries out the reaction UDP-N-acetyl-alpha-D-muramate + L-alanine + ATP = UDP-N-acetyl-alpha-D-muramoyl-L-alanine + ADP + phosphate + H(+). Its pathway is cell wall biogenesis; peptidoglycan biosynthesis. Cell wall formation. In Janthinobacterium sp. (strain Marseille) (Minibacterium massiliensis), this protein is UDP-N-acetylmuramate--L-alanine ligase.